A 476-amino-acid polypeptide reads, in one-letter code: Monodehydroascorbate reductase 2, peroxisomal (476 aa).

Topologically, residues 1-3 (MGR) are cytoplasmic. A helical membrane pass occupies residues 4–24 (AFVHVILGGGVAAGYAALEFA). Residues 12-15 (GGVA), Glu-40, Arg-47, Lys-52, and 146-147 (RN) each bind FAD. The Peroxisomal portion of the chain corresponds to 25 to 447 (RRGGYSRGEL…GGLALGEKPT (423 aa)). NAD(+)-binding positions include 171 to 177 (GGYIGME), Glu-195, Arg-201, and Gly-260. NADP(+) is bound at residue 173 to 177 (YIGME). Arg-201 and Gly-260 together coordinate NADP(+). Asp-297 is an FAD binding site. NAD(+) is bound at residue 314 to 315 (EH). 314–315 (EH) is an NADP(+) binding site. Val-316 contacts FAD. Arg-320 is a binding site for L-ascorbate. Tyr-346 provides a ligand contact to FAD. An NAD(+)-binding site is contributed by Tyr-346. Tyr-346 is a binding site for NADP(+). Arg-348 lines the L-ascorbate pocket. Residues 448–468 (YVWHATAGVIAAASIAAFGYW) form a helical membrane-spanning segment. At 469 to 476 (YGRKRRRW) the chain is on the cytoplasmic side.

This sequence belongs to the FAD-dependent oxidoreductase family. Requires FAD as cofactor.

The protein localises to the peroxisome membrane. The enzyme catalyses 2 monodehydro-L-ascorbate radical + NADH + H(+) = 2 L-ascorbate + NAD(+). Its function is as follows. Catalyzes the conversion of monodehydroascorbate to ascorbate, oxidizing NADH in the process. Ascorbate is a major antioxidant against reactive oxygen species (ROS) and nitric oxide (NO). The polypeptide is Monodehydroascorbate reductase 2, peroxisomal (Oryza sativa subsp. japonica (Rice)).